A 64-amino-acid polypeptide reads, in one-letter code: Conotoxin VnMLCL-042 (64 aa).

The N-terminal stretch at 1–19 is a signal peptide; it reads MLCLPVFIILLLLASPAAP. Positions 20-43 are excised as a propeptide; that stretch reads NPLQTRIQSNLIRAGPEDANMKTD. Position 63 is a methionine amide (Met-63).

Belongs to the conotoxin T superfamily. As to expression, expressed by the venom duct.

The protein resides in the secreted. This chain is Conotoxin VnMLCL-042, found in Conus ventricosus (Mediterranean cone).